A 400-amino-acid chain; its full sequence is DNA primase large subunit PriL (400 aa).

Cysteine 247, cysteine 356, cysteine 367, and cysteine 373 together coordinate [4Fe-4S] cluster.

This sequence belongs to the eukaryotic-type primase large subunit family. As to quaternary structure, heterodimer of a small subunit (PriS) and a large subunit (PriL). [4Fe-4S] cluster serves as cofactor.

Functionally, regulatory subunit of DNA primase, an RNA polymerase that catalyzes the synthesis of short RNA molecules used as primers for DNA polymerase during DNA replication. Stabilizes and modulates the activity of the small subunit, increasing the rate of DNA synthesis, and conferring RNA synthesis capability. The DNA polymerase activity may enable DNA primase to also catalyze primer extension after primer synthesis. May also play a role in DNA repair. The sequence is that of DNA primase large subunit PriL from Thermococcus kodakarensis (strain ATCC BAA-918 / JCM 12380 / KOD1) (Pyrococcus kodakaraensis (strain KOD1)).